Reading from the N-terminus, the 208-residue chain is ATP-dependent Clp protease proteolytic subunit (208 aa).

Residue serine 112 is the Nucleophile of the active site. Histidine 137 is a catalytic residue.

The protein belongs to the peptidase S14 family. As to quaternary structure, fourteen ClpP subunits assemble into 2 heptameric rings which stack back to back to give a disk-like structure with a central cavity, resembling the structure of eukaryotic proteasomes.

It localises to the cytoplasm. It carries out the reaction Hydrolysis of proteins to small peptides in the presence of ATP and magnesium. alpha-casein is the usual test substrate. In the absence of ATP, only oligopeptides shorter than five residues are hydrolyzed (such as succinyl-Leu-Tyr-|-NHMec, and Leu-Tyr-Leu-|-Tyr-Trp, in which cleavage of the -Tyr-|-Leu- and -Tyr-|-Trp bonds also occurs).. Functionally, cleaves peptides in various proteins in a process that requires ATP hydrolysis. Has a chymotrypsin-like activity. Plays a major role in the degradation of misfolded proteins. The chain is ATP-dependent Clp protease proteolytic subunit from Buchnera aphidicola subsp. Acyrthosiphon pisum (strain APS) (Acyrthosiphon pisum symbiotic bacterium).